The sequence spans 350 residues: GTPase Obg (350 aa).

Positions 1–159 constitute an Obg domain; that stretch reads MKLVDEAEIL…RLLKLELRLL (159 aa). The disordered stretch occupies residues 127–146; that stretch reads NMHFKSSVNRAPRQSTTGEE. The span at 130–143 shows a compositional bias: polar residues; sequence FKSSVNRAPRQSTT. The 178-residue stretch at 160-337 folds into the OBG-type G domain; sequence ADVGLLGFPN…IMKDVMAFFD (178 aa). GTP contacts are provided by residues 166-173, 191-195, 213-216, 287-290, and 318-320; these read GFPNAGKS, FTTLY, DVPG, NKAD, and SAL. The Mg(2+) site is built by serine 173 and threonine 193.

The protein belongs to the TRAFAC class OBG-HflX-like GTPase superfamily. OBG GTPase family. In terms of assembly, monomer. It depends on Mg(2+) as a cofactor.

Its subcellular location is the cytoplasm. Its function is as follows. An essential GTPase which binds GTP, GDP and possibly (p)ppGpp with moderate affinity, with high nucleotide exchange rates and a fairly low GTP hydrolysis rate. Plays a role in control of the cell cycle, stress response, ribosome biogenesis and in those bacteria that undergo differentiation, in morphogenesis control. This chain is GTPase Obg, found in Xanthomonas oryzae pv. oryzae (strain MAFF 311018).